We begin with the raw amino-acid sequence, 105 residues long: NADH-quinone oxidoreductase subunit K (105 aa).

3 helical membrane passes run 8–28, 33–53, and 65–85; these read VTNG…GIII, ILIL…NFLI, and VFVF…LAIV.

It belongs to the complex I subunit 4L family. In terms of assembly, NDH-1 is composed of 14 different subunits. Subunits NuoA, H, J, K, L, M, N constitute the membrane sector of the complex.

The protein resides in the cell inner membrane. The enzyme catalyses a quinone + NADH + 5 H(+)(in) = a quinol + NAD(+) + 4 H(+)(out). Functionally, NDH-1 shuttles electrons from NADH, via FMN and iron-sulfur (Fe-S) centers, to quinones in the respiratory chain. The immediate electron acceptor for the enzyme in this species is believed to be ubiquinone. Couples the redox reaction to proton translocation (for every two electrons transferred, four hydrogen ions are translocated across the cytoplasmic membrane), and thus conserves the redox energy in a proton gradient. In Francisella philomiragia subsp. philomiragia (strain ATCC 25017 / CCUG 19701 / FSC 153 / O#319-036), this protein is NADH-quinone oxidoreductase subunit K.